A 32-amino-acid chain; its full sequence is Secreted proteinase (32 aa).

Residues Asp-1 to Leu-32 form a disordered region. Asp-22 functions as the Charge relay system in the catalytic mechanism.

This sequence belongs to the peptidase S8 family.

The protein localises to the secreted. This Haloferax mediterranei (Halobacterium mediterranei) protein is Secreted proteinase.